A 964-amino-acid chain; its full sequence is Activator of stress genes 1 (964 aa).

Positions 21–47 (CDECRKKKVKCDGQQPCIHCTVYSYEC) form a DNA-binding region, zn(2)-C6 fungal-type. The interval 104-125 (ASTIPASNNPSKPRKYKTKSTR) is disordered. At Ser166 the chain carries Phosphoserine; by ATM or ATR. The residue at position 186 (Ser186) is a Phosphoserine. 3 stretches are compositionally biased toward polar residues: residues 190 to 201 (PVLSSNSKNSTP), 209 to 225 (KSDS…DSVD), and 733 to 759 (NNTP…TNMS). Disordered stretches follow at residues 190–225 (PVLS…DSVD), 733–764 (NNTP…ERDP), and 800–900 (NSAF…SPSY). Residues 800–896 (NSAFDFSSSK…NDFGIKIDNN (97 aa)) are compositionally biased toward low complexity. Ser963 is subject to Phosphoserine.

Belongs to the ASG1 family.

Its subcellular location is the nucleus. Probable transcription factor involved in the stress response. The sequence is that of Activator of stress genes 1 (ASG1) from Saccharomyces cerevisiae (strain ATCC 204508 / S288c) (Baker's yeast).